A 1038-amino-acid polypeptide reads, in one-letter code: Translation initiation factor IF-2 (1038 aa).

The segment at 32–442 (GSALASLSDE…RKGVNTAAPR (411 aa)) is disordered. Composition is skewed to low complexity over residues 65–77 (PPTK…PVAP), 100–113 (PAEA…PAQP), and 131–147 (PKLA…APAA). Composition is skewed to basic and acidic residues over residues 204–217 (SGGR…KRES) and 275–295 (RSLD…DAGK). A compositionally biased stretch (low complexity) spans 311 to 328 (PSAPAKPAAPTGSSGPAA). Residues 331–344 (PDIKLTRDVIEGHK) are compositionally biased toward basic and acidic residues. A compositionally biased stretch (basic residues) spans 422–435 (HHYRRSRPRIRRKG). The tr-type G domain occupies 529–696 (ARPPVVTFLG…TLLTIAELNE (168 aa)). The interval 538-545 (GHVDHGKT) is G1. 538–545 (GHVDHGKT) contributes to the GTP binding site. The G2 stretch occupies residues 563–567 (GITQH). The G3 stretch occupies residues 584-587 (DTPG). GTP is bound by residues 584 to 588 (DTPGH) and 638 to 641 (NKID). Positions 638–641 (NKID) are G4. The segment at 674-676 (SAT) is G5.

This sequence belongs to the TRAFAC class translation factor GTPase superfamily. Classic translation factor GTPase family. IF-2 subfamily.

The protein localises to the cytoplasm. Its function is as follows. One of the essential components for the initiation of protein synthesis. Protects formylmethionyl-tRNA from spontaneous hydrolysis and promotes its binding to the 30S ribosomal subunits. Also involved in the hydrolysis of GTP during the formation of the 70S ribosomal complex. This is Translation initiation factor IF-2 from Rhodopirellula baltica (strain DSM 10527 / NCIMB 13988 / SH1).